The following is a 205-amino-acid chain: uncharacterized protein (205 aa).

In terms of domain architecture, Nudix hydrolase spans 51-189 (ANVDAVAILA…KKGFAIDVRL (139 aa)). A Nudix box motif is present at residues 90–111 (GLVDSKESCEDAAIRELREETG).

The protein belongs to the Nudix hydrolase family.

The protein localises to the cytoplasm. It localises to the nucleus. This is an uncharacterized protein from Schizosaccharomyces pombe (strain 972 / ATCC 24843) (Fission yeast).